The following is a 165-amino-acid chain: Regulator of ribonuclease activity A (165 aa).

It belongs to the RraA family. In terms of assembly, homotrimer. Binds to both RNA-binding sites in the C-terminal region of Rne and to RhlB.

The protein resides in the cytoplasm. Globally modulates RNA abundance by binding to RNase E (Rne) and regulating its endonucleolytic activity. Can modulate Rne action in a substrate-dependent manner by altering the composition of the degradosome. Modulates RNA-binding and helicase activities of the degradosome. The polypeptide is Regulator of ribonuclease activity A (Actinobacillus pleuropneumoniae serotype 7 (strain AP76)).